A 217-amino-acid polypeptide reads, in one-letter code: Large ribosomal subunit protein uL1 (217 aa).

Belongs to the universal ribosomal protein uL1 family. In terms of assembly, part of the 50S ribosomal subunit.

Its function is as follows. Binds directly to 23S rRNA. Probably involved in E site tRNA release. Functionally, protein L1 is also a translational repressor protein, it controls the translation of its operon by binding to its mRNA. The sequence is that of Large ribosomal subunit protein uL1 from Thermoplasma volcanium (strain ATCC 51530 / DSM 4299 / JCM 9571 / NBRC 15438 / GSS1).